A 190-amino-acid chain; its full sequence is GMP synthase [glutamine-hydrolyzing] subunit A (190 aa).

A Glutamine amidotransferase type-1 domain is found at T2–N189. The active-site Nucleophile is C76. Active-site residues include H163 and E165.

Heterodimer composed of a glutamine amidotransferase subunit (A) and a GMP-binding subunit (B).

The enzyme catalyses XMP + L-glutamine + ATP + H2O = GMP + L-glutamate + AMP + diphosphate + 2 H(+). It functions in the pathway purine metabolism; GMP biosynthesis; GMP from XMP (L-Gln route): step 1/1. Functionally, catalyzes the synthesis of GMP from XMP. This is GMP synthase [glutamine-hydrolyzing] subunit A from Methanobrevibacter smithii (strain ATCC 35061 / DSM 861 / OCM 144 / PS).